A 408-amino-acid polypeptide reads, in one-letter code: Histidine--tRNA ligase (408 aa).

This sequence belongs to the class-II aminoacyl-tRNA synthetase family. In terms of assembly, homodimer.

Its subcellular location is the cytoplasm. The catalysed reaction is tRNA(His) + L-histidine + ATP = L-histidyl-tRNA(His) + AMP + diphosphate + H(+). The polypeptide is Histidine--tRNA ligase (Campylobacter jejuni subsp. jejuni serotype O:2 (strain ATCC 700819 / NCTC 11168)).